The primary structure comprises 251 residues: Triosephosphate isomerase (251 aa).

9–11 (NWK) serves as a coordination point for substrate. The Electrophile role is filled by His-95. Glu-167 functions as the Proton acceptor in the catalytic mechanism. Substrate-binding positions include Gly-173, Ser-213, and 234–235 (GG). A Phosphoserine modification is found at Ser-213.

This sequence belongs to the triosephosphate isomerase family. In terms of assembly, homodimer.

It localises to the cytoplasm. The catalysed reaction is D-glyceraldehyde 3-phosphate = dihydroxyacetone phosphate. It participates in carbohydrate biosynthesis; gluconeogenesis. Its pathway is carbohydrate degradation; glycolysis; D-glyceraldehyde 3-phosphate from glycerone phosphate: step 1/1. Involved in the gluconeogenesis. Catalyzes stereospecifically the conversion of dihydroxyacetone phosphate (DHAP) to D-glyceraldehyde-3-phosphate (G3P). In Anoxybacillus flavithermus (strain DSM 21510 / WK1), this protein is Triosephosphate isomerase.